A 406-amino-acid polypeptide reads, in one-letter code: Elongation factor Ts, mitochondrial (406 aa).

The segment at 387 to 406 is disordered; sequence ARPSDETSFADQVKEAAGLA.

It belongs to the EF-Ts family.

Its subcellular location is the mitochondrion. In terms of biological role, associates with the EF-Tu.GDP complex and induces the exchange of GDP to GTP. It remains bound to the aminoacyl-tRNA.EF-Tu.GTP complex up to the GTP hydrolysis stage on the ribosome. The polypeptide is Elongation factor Ts, mitochondrial (Malassezia globosa (strain ATCC MYA-4612 / CBS 7966) (Dandruff-associated fungus)).